The following is a 179-amino-acid chain: Large ribosomal subunit protein uL6 (179 aa).

Belongs to the universal ribosomal protein uL6 family. Part of the 50S ribosomal subunit.

In terms of biological role, this protein binds to the 23S rRNA, and is important in its secondary structure. It is located near the subunit interface in the base of the L7/L12 stalk, and near the tRNA binding site of the peptidyltransferase center. This Bacillus anthracis protein is Large ribosomal subunit protein uL6.